The following is a 522-amino-acid chain: N-acetylgalactosamine-6-sulfatase (522 aa).

Positions 1–25 (MAAVAAATRWHLLLVLSAAGLGVTG) are cleaved as a signal peptide. Positions 27–379 (PQPPNILLLL…PAMLQGRLTE (353 aa)) are catalytic domain. Positions 38, 39, and 78 each coordinate Ca(2+). C78 (nucleophile) is an active-site residue. C78 bears the 3-oxoalanine (Cys) mark. H141 is an active-site residue. An N-linked (GlcNAc...) asparagine glycan is attached at N203. Residues D288 and N289 each coordinate Ca(2+). C308 and C419 are disulfide-bonded. N423 is a glycosylation site (N-linked (GlcNAc...) asparagine). Disulfide bonds link C489-C518 and C501-C507.

The protein belongs to the sulfatase family. Homodimer. The cofactor is Ca(2+). The conversion to 3-oxoalanine (also known as C-formylglycine, FGly), of a serine or cysteine residue in prokaryotes and of a cysteine residue in eukaryotes, is critical for catalytic activity.

The protein localises to the lysosome. It catalyses the reaction Hydrolysis of the 6-sulfate groups of the N-acetyl-D-galactosamine 6-sulfate units of chondroitin sulfate and of the D-galactose 6-sulfate units of keratan sulfate.. The protein is N-acetylgalactosamine-6-sulfatase (GALNS) of Sus scrofa (Pig).